The following is a 58-amino-acid chain: MSFDKKLLEIVACPVCKGKLDYDKAKQQLICKLDRLAYPINDGIPVLLENKAESWEEA.

This sequence belongs to the UPF0434 family.

The chain is UPF0434 protein Swoo_1821 from Shewanella woodyi (strain ATCC 51908 / MS32).